A 106-amino-acid chain; its full sequence is Protein RnfH (106 aa).

Belongs to the UPF0125 (RnfH) family.

The chain is Protein RnfH from Ectopseudomonas mendocina (strain ymp) (Pseudomonas mendocina).